Reading from the N-terminus, the 149-residue chain is Large ribosomal subunit protein bL9 (149 aa).

This sequence belongs to the bacterial ribosomal protein bL9 family.

Binds to the 23S rRNA. This chain is Large ribosomal subunit protein bL9, found in Xanthomonas axonopodis pv. citri (strain 306).